Consider the following 314-residue polypeptide: MPGPLYGRDLLSIRDLSSEEVWLVIETARQMKLRYYAGERIIPMLKGKTIALIFEKPSTRTRVSMEVAALQLGATPLTFRRDELQLARGEPIKDTARVLSRYVDAIAARVFKHESLEEMAAYASVPVINMLSDLEHPLQALADALTIYEKKGHIKGIKVVYVGDGRNNVAHSLLLVIAKLGGHIVISSPKELTPRKDILEAAQLAAKETGATIELIEDPAEAVRGADVVYTDVWVSMGEESLAEERRRLLQRYQVNEKLMSLASNNAIFMHCLPAHRGEEVTEEVIEGPWSVVWDQAENRLHAQKAVLALILAP.

Carbamoyl phosphate contacts are provided by residues 58 to 61 (STRT), Gln-85, Arg-109, and 136 to 139 (HPLQ). Residues Asn-168, Asp-232, and 236 to 237 (SM) each bind L-ornithine. Carbamoyl phosphate-binding positions include 272 to 273 (CL) and Arg-300.

This sequence belongs to the aspartate/ornithine carbamoyltransferase superfamily. OTCase family.

It localises to the cytoplasm. The enzyme catalyses carbamoyl phosphate + L-ornithine = L-citrulline + phosphate + H(+). It participates in amino-acid biosynthesis; L-arginine biosynthesis; L-arginine from L-ornithine and carbamoyl phosphate: step 1/3. Its function is as follows. Reversibly catalyzes the transfer of the carbamoyl group from carbamoyl phosphate (CP) to the N(epsilon) atom of ornithine (ORN) to produce L-citrulline. The polypeptide is Ornithine carbamoyltransferase (Hyperthermus butylicus (strain DSM 5456 / JCM 9403 / PLM1-5)).